The chain runs to 205 residues: Small ribosomal subunit protein uS4 (205 aa).

The interval 18–46 (NIWGRPKSPVNRREYGPGQHGQRRKGKLS) is disordered. The S4 RNA-binding domain occupies 94–154 (RRLDTVVFRA…EASKQLAVVL (61 aa)).

It belongs to the universal ribosomal protein uS4 family. In terms of assembly, part of the 30S ribosomal subunit. Contacts protein S5. The interaction surface between S4 and S5 is involved in control of translational fidelity.

Functionally, one of the primary rRNA binding proteins, it binds directly to 16S rRNA where it nucleates assembly of the body of the 30S subunit. With S5 and S12 plays an important role in translational accuracy. The polypeptide is Small ribosomal subunit protein uS4 (Bradyrhizobium sp. (strain ORS 278)).